Reading from the N-terminus, the 475-residue chain is Ribulose bisphosphate carboxylase large chain (475 aa).

Residues 1–2 (MS) constitute a propeptide that is removed on maturation. Pro3 bears the N-acetylproline mark. Position 14 is an N6,N6,N6-trimethyllysine (Lys14). Substrate is bound by residues Asn123 and Thr173. Lys175 functions as the Proton acceptor in the catalytic mechanism. Lys177 serves as a coordination point for substrate. Mg(2+) contacts are provided by Lys201, Asp203, and Glu204. At Lys201 the chain carries N6-carboxylysine. Residue His294 is the Proton acceptor of the active site. Residues Arg295, His327, and Ser379 each contribute to the substrate site.

Belongs to the RuBisCO large chain family. Type I subfamily. As to quaternary structure, heterohexadecamer of 8 large chains and 8 small chains; disulfide-linked. The disulfide link is formed within the large subunit homodimers. It depends on Mg(2+) as a cofactor. In terms of processing, the disulfide bond which can form in the large chain dimeric partners within the hexadecamer appears to be associated with oxidative stress and protein turnover.

The protein localises to the plastid. It localises to the chloroplast. It carries out the reaction 2 (2R)-3-phosphoglycerate + 2 H(+) = D-ribulose 1,5-bisphosphate + CO2 + H2O. It catalyses the reaction D-ribulose 1,5-bisphosphate + O2 = 2-phosphoglycolate + (2R)-3-phosphoglycerate + 2 H(+). Its function is as follows. RuBisCO catalyzes two reactions: the carboxylation of D-ribulose 1,5-bisphosphate, the primary event in carbon dioxide fixation, as well as the oxidative fragmentation of the pentose substrate in the photorespiration process. Both reactions occur simultaneously and in competition at the same active site. The sequence is that of Ribulose bisphosphate carboxylase large chain from Staurastrum punctulatum (Green alga).